The following is a 714-amino-acid chain: Phosphate acetyltransferase (714 aa).

Residues 391–714 (AFRYQLTELA…LTAIQSAQQQ (324 aa)) are phosphate acetyltransferase.

It in the N-terminal section; belongs to the CobB/CobQ family. In the C-terminal section; belongs to the phosphate acetyltransferase and butyryltransferase family. In terms of assembly, homohexamer.

The protein localises to the cytoplasm. It carries out the reaction acetyl-CoA + phosphate = acetyl phosphate + CoA. It functions in the pathway metabolic intermediate biosynthesis; acetyl-CoA biosynthesis; acetyl-CoA from acetate: step 2/2. Its activity is regulated as follows. Inhibited by NADH and ATP. Pyruvate and PEP act as activators of the acetyl phosphate forming reaction while inhibiting the formation of acetyl-CoA. Functionally, involved in acetate metabolism. Catalyzes the reversible interconversion of acetyl-CoA and acetyl phosphate. The direction of the overall reaction changes depending on growth conditions. On minimal medium acetyl-CoA is generated. In rich medium acetyl-CoA is converted to acetate and allowing the cell to dump the excess of acetylation potential in exchange for energy in the form of ATP. The main pathway for acetate production during exponential phase. This Escherichia coli (strain K12) protein is Phosphate acetyltransferase (pta).